The following is a 335-amino-acid chain: Methyltransferase pgmE (335 aa).

The protein belongs to the methyltransferase superfamily.

It participates in pigment biosynthesis. Its pathway is secondary metabolite biosynthesis. Functionally, methyltransferase; part of the gene cluster that mediates the biosynthesis of pleosporalin A, ascomycone A, as well as a third cryptic naphthoquinone derived pigment, all responsible for the coloration of conidia. Essential for the production of pleosporalin A, but not the 2 other final products. The pathway begins with the biosynthesis of the cyclized heptaketide 3-acetonyl-1,6,8-trihydroxy-2-naphthaldehyde by the NR-PKS pgmA. The C-6 hydroxyl group is further methylated by the O-methyltransferase pgmB to yield fusarubinaldehyde which is in turn oxidized by the cytochrome P450 monooxygenase pgmC at C-9. The C-1 hydroxyl group is then methylated spontaneously. Although pgmE, pgmD and pgmH are essential for the production of pleosporalin A, it is not the case for the 2 other final products and it remains difficult to assign a specific function to each enzyme. PgmF and pgmG seem not to be involved in pigment biosynthesis although they were regulated by the cluster-specific transcription factor pgmR. The protein is Methyltransferase pgmE of Aspergillus terreus.